The chain runs to 64 residues: Conotoxin VnMLCL-05 (64 aa).

The signal sequence occupies residues 1 to 19; it reads MLCLPVFIILLLLASPAAP. A propeptide spanning residues 20 to 43 is cleaved from the precursor; that stretch reads NPLQTRIQSNLIRAGPEDANIKTD. K63 bears the Lysine amide mark.

This sequence belongs to the conotoxin T superfamily. As to expression, expressed by the venom duct.

Its subcellular location is the secreted. The chain is Conotoxin VnMLCL-05 from Conus ventricosus (Mediterranean cone).